A 588-amino-acid chain; its full sequence is 2-succinyl-5-enolpyruvyl-6-hydroxy-3-cyclohexene-1-carboxylate synthase (588 aa).

This sequence belongs to the TPP enzyme family. MenD subfamily. In terms of assembly, homodimer. Mg(2+) is required as a cofactor. The cofactor is Mn(2+). Requires thiamine diphosphate as cofactor.

It carries out the reaction isochorismate + 2-oxoglutarate + H(+) = 5-enolpyruvoyl-6-hydroxy-2-succinyl-cyclohex-3-ene-1-carboxylate + CO2. The protein operates within quinol/quinone metabolism; 1,4-dihydroxy-2-naphthoate biosynthesis; 1,4-dihydroxy-2-naphthoate from chorismate: step 2/7. It participates in cofactor biosynthesis; phylloquinone biosynthesis. Functionally, catalyzes the thiamine diphosphate-dependent decarboxylation of 2-oxoglutarate and the subsequent addition of the resulting succinic semialdehyde-thiamine pyrophosphate anion to isochorismate to yield 2-succinyl-5-enolpyruvyl-6-hydroxy-3-cyclohexene-1-carboxylate (SEPHCHC). The polypeptide is 2-succinyl-5-enolpyruvyl-6-hydroxy-3-cyclohexene-1-carboxylate synthase (Prochlorococcus marinus (strain MIT 9515)).